A 94-amino-acid polypeptide reads, in one-letter code: Defensin alpha 5 (94 aa).

An N-terminal signal peptide occupies residues 1-19 (MRTIAILAAILLVALQAQA). 3 cysteine pairs are disulfide-bonded: Cys-65–Cys-93, Cys-67–Cys-82, and Cys-72–Cys-92.

It belongs to the alpha-defensin family. In terms of assembly, homodimer. Homotetramer. Interacts with B.antracis lef/lethal factor. In terms of processing, glycosylated. Post-translationally, proteolytically cleaved at Arg-62 by trypsin. Both the propeptide form proHD5/HD5(20-94) and HD5(56-94) are cleaved into the lumenal peptide form HD5(63-94) by trypsin. Unprocessed proHD5 exerts antimicrobial activities, but peptide potency is enhanced by peptide processing. Proteolytically cleaved in duodenal fluid; derived fragments are antimicrobially active against commensal bacteria (in vitro). (Microbial infection) The disulfide bridges and homodimerization are a prerequisite for the enhancement of S.flexneri adhesion and invasion. As to expression, expressed in the gastrointestinal, reproductive, and urinary tracts (at protein level). Expressed in Paneth cells of the small intestine (at protein level). Expressed throughout the urothelium of the lower urinary tract and in the collecting tubules of the kidney (at protein level). Expressed in stratified squamous epithelial cells of the female genital tract epithelia, such as in vagina, ectocervix, endocervix, endometrium, and fallopian tube (at protein level). Endometrial expression correlates with stages of the menstrual cycle: Expression is low during the early proliferative phase, increased during the mid- to late proliferative phase, peaks during the early secretory phase of the cycle, and decreases during the mid- to late secretory phase.

It is found in the secreted. The protein localises to the cytoplasmic vesicle. Its subcellular location is the secretory vesicle. Host-defense peptide that maintains sterility in the urogenital system. Has antimicrobial activity against a wide range of bacteria, including Gram-negative E.coli, P.aeruginosa and S.typhimurium, and Gram-positive E.aerogenes, S.aureus, B.cereus, E.faecium and L.monocytogenes. Confers resistance to intestinal infection by S.typhimurium. Exhibits antimicrobial activity against enteric commensal bacteria such as B.adolescentis, L.acidophilus, B.breve, L.fermentum, B.longum and S.thermophilus. Binds to bacterial membranes and causes membrane disintegration. Induces the secretion of the chemokine IL-8 by intestinal epithelial cells. Binds to B.antracis lef/lethal factor, a major virulence factor from B.anthracis, and neutralizes its enzymatic activity. Its function is as follows. (Microbial infection) Acts as a target for S.flexneri infection by binding to the bacterium, possibly via bacterial surface proteins, and thereby augmenting infectivity via enhanced bacterial adhesion and invasion of epithelial cells and tissues. The polypeptide is Defensin alpha 5 (DEFA5) (Homo sapiens (Human)).